The chain runs to 767 residues: Transducin-like enhancer protein 1 (767 aa).

Disordered stretches follow at residues 1–26 (MFPQ…PPQS) and 200–346 (ADAE…TSAS). Basic and acidic residues-rich tracts occupy residues 200–209 (ADAEHRERDP), 235–255 (RKTE…RSED), and 277–289 (NGVD…RKDP). Residues 212–274 (SCLTLPNGER…SPHSVHSYSS (63 aa)) are CCN domain. Positions 294–306 (PNSMTSSSSVSPS) are enriched in low complexity. Over residues 324–346 (LKSSTPNSQSDLNTPGPSGTSAS) the composition is skewed to polar residues. WD repeat units follow at residues 467 to 498 (GIPR…HVYT), 525 to 555 (NRDN…SIWD), 569 to 599 (SSAP…VVWD), 611 to 641 (GHTD…RCWD), 693 to 723 (LHES…NAWR), and 734 to 764 (KESS…TVYE).

The protein belongs to the WD repeat Groucho/TLE family. Ubiquitinated by XIAP/BIRC4. Abundantly expressed in brain, lung, testis and ovary in comparison with liver, heart, kidney and spleen. Ubiquitously expressed in the developing embryo. Present in unfertilized and fertilized eggs.

The protein resides in the nucleus. Its function is as follows. Nuclear effector molecule. This is Transducin-like enhancer protein 1 (esg1) from Xenopus laevis (African clawed frog).